The sequence spans 295 residues: Glutamate-binding protein GluB (295 aa).

The signal sequence occupies residues 1–26; sequence MSAKRTFTRIGAILGATALAGVTLTA. C27 carries the N-palmitoyl cysteine lipid modification. C27 carries S-diacylglycerol cysteine lipidation.

The protein belongs to the bacterial solute-binding protein 3 family. As to quaternary structure, the complex is composed of two ATP-binding proteins (GluA), two transmembrane proteins (GluC and GluD) and a solute-binding protein (GluB).

The protein localises to the cell membrane. Binding of glutamate or asparatate induces a higher thermal stability of the protein structure. Its function is as follows. Part of the ABC transporter complex GluABCD involved in glutamate uptake. Binds glutamate with a high affinity. Also binds aspartate with high affinity, suggesting that GluB could be involved in the transport of both amino acid residues into the cell. The chain is Glutamate-binding protein GluB from Corynebacterium glutamicum (strain ATCC 13032 / DSM 20300 / JCM 1318 / BCRC 11384 / CCUG 27702 / LMG 3730 / NBRC 12168 / NCIMB 10025 / NRRL B-2784 / 534).